Here is a 177-residue protein sequence, read N- to C-terminus: Protein SOB FIVE-LIKE 6 (177 aa).

The short motif at 14-19 is the SOFL-A element; sequence SGWTMY. Disordered stretches follow at residues 37 to 60 and 78 to 104; these read ETKQ…PYYC and KSKS…FNSS. The SOFL-B motif lies at 47–56; the sequence is SMVSDASSGP. Residues 79–90 show a composition bias toward basic residues; the sequence is SKSKNKNKNKKK.

Belongs to the SOFL plant protein family. In terms of tissue distribution, expressed in seedlings, flowers and siliques. Barely detectable in roots and leaves.

The protein localises to the cytoplasm. The protein resides in the nucleus. In terms of biological role, involved in cytokinin-mediated development. The sequence is that of Protein SOB FIVE-LIKE 6 from Arabidopsis thaliana (Mouse-ear cress).